The primary structure comprises 72 residues: Gas vesicle protein A (72 aa).

The protein belongs to the gas vesicle GvpA family. As to quaternary structure, the gas vesicle shell is 2 nm thick and consists of a single layer of this protein. It forms helical ribs nearly perpendicular to the long axis of the vesicle.

It localises to the gas vesicle shell. Gas vesicles are hollow, gas filled proteinaceous nanostructures found in some microorganisms. During planktonic growth they allow positioning of the organism at a favorable depth for light or nutrient acquisition. GvpA forms the protein shell. In Planktothrix agardhii (Oscillatoria agardhii), this protein is Gas vesicle protein A.